A 234-amino-acid chain; its full sequence is UPF0173 metal-dependent hydrolase R01310 (234 aa).

The protein belongs to the UPF0173 family.

In Rhizobium meliloti (strain 1021) (Ensifer meliloti), this protein is UPF0173 metal-dependent hydrolase R01310.